The primary structure comprises 118 residues: UPF0102 protein CMM_1377 (118 aa).

It belongs to the UPF0102 family.

The protein is UPF0102 protein CMM_1377 of Clavibacter michiganensis subsp. michiganensis (strain NCPPB 382).